Reading from the N-terminus, the 202-residue chain is Amelogenin (202 aa).

S16 carries the post-translational modification Phosphoserine. Residues 77–202 (QPAPPQQPVM…TDKTKREEVD (126 aa)) are disordered. Pro residues predominate over residues 78–87 (PAPPQQPVMP). Residues 101–112 (QPNLPQPGQQPY) are compositionally biased toward low complexity. Residues 113-125 (QPQPAQQPQPHQP) are compositionally biased toward pro residues. Positions 126–158 (IQPIQPIQPIQPMQPMQPMQPMQPMQPMQPQTP) are enriched in low complexity. The span at 164–176 (PLPPQPPLPPMFP) shows a compositional bias: pro residues.

The protein belongs to the amelogenin family.

It localises to the secreted. Its subcellular location is the extracellular space. The protein resides in the extracellular matrix. Functionally, plays a role in the biomineralization of teeth. Seems to regulate the formation of crystallites during the secretory stage of tooth enamel development. Thought to play a major role in the structural organization and mineralization of developing enamel. This chain is Amelogenin (AMEL), found in Monodelphis domestica (Gray short-tailed opossum).